The primary structure comprises 195 residues: ATP-dependent Clp protease proteolytic subunit (195 aa).

The active-site Nucleophile is the Ser99. His124 is a catalytic residue.

This sequence belongs to the peptidase S14 family. As to quaternary structure, fourteen ClpP subunits assemble into 2 heptameric rings which stack back to back to give a disk-like structure with a central cavity, resembling the structure of eukaryotic proteasomes.

The protein localises to the cytoplasm. It catalyses the reaction Hydrolysis of proteins to small peptides in the presence of ATP and magnesium. alpha-casein is the usual test substrate. In the absence of ATP, only oligopeptides shorter than five residues are hydrolyzed (such as succinyl-Leu-Tyr-|-NHMec, and Leu-Tyr-Leu-|-Tyr-Trp, in which cleavage of the -Tyr-|-Leu- and -Tyr-|-Trp bonds also occurs).. Cleaves peptides in various proteins in a process that requires ATP hydrolysis. Has a chymotrypsin-like activity. Plays a major role in the degradation of misfolded proteins. In Caldicellulosiruptor saccharolyticus (strain ATCC 43494 / DSM 8903 / Tp8T 6331), this protein is ATP-dependent Clp protease proteolytic subunit.